The following is a 206-amino-acid chain: Large ribosomal subunit protein uL4 (206 aa).

The protein belongs to the universal ribosomal protein uL4 family. As to quaternary structure, part of the 50S ribosomal subunit.

Its function is as follows. One of the primary rRNA binding proteins, this protein initially binds near the 5'-end of the 23S rRNA. It is important during the early stages of 50S assembly. It makes multiple contacts with different domains of the 23S rRNA in the assembled 50S subunit and ribosome. In terms of biological role, forms part of the polypeptide exit tunnel. The polypeptide is Large ribosomal subunit protein uL4 (Methylocella silvestris (strain DSM 15510 / CIP 108128 / LMG 27833 / NCIMB 13906 / BL2)).